The following is a 342-amino-acid chain: Succinylglutamate desuccinylase (342 aa).

The Zn(2+) site is built by histidine 63, glutamate 66, and histidine 155. Residue glutamate 219 is part of the active site.

It belongs to the AspA/AstE family. Succinylglutamate desuccinylase subfamily. The cofactor is Zn(2+).

It carries out the reaction N-succinyl-L-glutamate + H2O = L-glutamate + succinate. Its pathway is amino-acid degradation; L-arginine degradation via AST pathway; L-glutamate and succinate from L-arginine: step 5/5. Transforms N(2)-succinylglutamate into succinate and glutamate. This Vibrio parahaemolyticus serotype O3:K6 (strain RIMD 2210633) protein is Succinylglutamate desuccinylase.